The sequence spans 146 residues: LLNQKTAKYIPVHYVLSNYPHYEPSYYPHKPAVPVNNQYMPYPYYAKPVAVRPHVQIPQWQVLPNTYTPTVVRHPHLPASFIVIPPKKIQDKTGNPTINTIATAEPTLTPTTEPIVNTVVTTEASSEFTITSTPETTTVPVTSTMV.

4 O-linked (GalNAc...) threonine glycosylation sites follow: T97, T107, T112, and T118. T121 bears the Phosphothreonine mark. Position 125 is a phosphoserine; alternate (S125). An O-linked (GalNAc...) serine; alternate glycan is attached at S125. An O-linked (GalNAc...) threonine glycan is attached at T142. Phosphoserine is present on S143.

Belongs to the kappa-casein family. In terms of tissue distribution, mammary gland specific. Secreted in milk.

It localises to the secreted. Its function is as follows. Kappa-casein stabilizes micelle formation, preventing casein precipitation in milk. The polypeptide is Kappa-casein (CSN3) (Panthera uncia (Snow leopard)).